A 239-amino-acid polypeptide reads, in one-letter code: NAD-dependent protein deacylase (239 aa).

Residues 1–239 (MNVLILTGAG…PKLLNHFSAM (239 aa)) enclose the Deacetylase sirtuin-type domain. Residue 8-27 (GAGISAESGIPTFRDANGLW) participates in NAD(+) binding. Residues Y52 and R55 each coordinate substrate. Position 93–96 (93–96 (QNID)) interacts with NAD(+). Catalysis depends on H111, which acts as the Proton acceptor. Residues 182-184 (GTS), 207-209 (NLD), and A225 contribute to the NAD(+) site.

It belongs to the sirtuin family. Class III subfamily.

It is found in the cytoplasm. It carries out the reaction N(6)-acetyl-L-lysyl-[protein] + NAD(+) + H2O = 2''-O-acetyl-ADP-D-ribose + nicotinamide + L-lysyl-[protein]. It catalyses the reaction N(6)-succinyl-L-lysyl-[protein] + NAD(+) + H2O = 2''-O-succinyl-ADP-D-ribose + nicotinamide + L-lysyl-[protein]. NAD-dependent lysine deacetylase and desuccinylase that specifically removes acetyl and succinyl groups on target proteins. Modulates the activities of several proteins which are inactive in their acylated form. This is NAD-dependent protein deacylase from Rhodopirellula baltica (strain DSM 10527 / NCIMB 13988 / SH1).